Reading from the N-terminus, the 438-residue chain is GTPase Der (438 aa).

2 consecutive EngA-type G domains span residues 4-168 (PVVA…DDNS) and 177-352 (TKVC…NNYS). GTP is bound by residues 10 to 17 (GRANVGKS), 57 to 61 (DTGGL), 120 to 123 (NKID), 183 to 190 (GKPNVGKS), 230 to 234 (DTAGL), and 295 to 298 (NKWD). In terms of domain architecture, KH-like spans 353–437 (MRISTGVLND…PLQFEFKTRG (85 aa)).

The protein belongs to the TRAFAC class TrmE-Era-EngA-EngB-Septin-like GTPase superfamily. EngA (Der) GTPase family. Associates with the 50S ribosomal subunit.

GTPase that plays an essential role in the late steps of ribosome biogenesis. The sequence is that of GTPase Der from Finegoldia magna (strain ATCC 29328 / DSM 20472 / WAL 2508) (Peptostreptococcus magnus).